The chain runs to 604 residues: Aspartate--tRNA(Asp/Asn) ligase (604 aa).

Glutamate 175 contacts L-aspartate. Residues 199 to 202 (QMFK) are aspartate. L-aspartate contacts are provided by arginine 221 and histidine 451. 221–223 (RDE) serves as a coordination point for ATP. Glutamate 485 lines the ATP pocket. Arginine 492 contributes to the L-aspartate binding site. 537 to 540 (GIDR) is a binding site for ATP.

Belongs to the class-II aminoacyl-tRNA synthetase family. Type 1 subfamily. As to quaternary structure, homodimer.

The protein resides in the cytoplasm. The enzyme catalyses tRNA(Asx) + L-aspartate + ATP = L-aspartyl-tRNA(Asx) + AMP + diphosphate. Its function is as follows. Aspartyl-tRNA synthetase with relaxed tRNA specificity since it is able to aspartylate not only its cognate tRNA(Asp) but also tRNA(Asn). Reaction proceeds in two steps: L-aspartate is first activated by ATP to form Asp-AMP and then transferred to the acceptor end of tRNA(Asp/Asn). This Erythrobacter litoralis (strain HTCC2594) protein is Aspartate--tRNA(Asp/Asn) ligase.